A 503-amino-acid chain; its full sequence is uncharacterized protein (503 aa).

Transmembrane regions (helical) follow at residues 20-40 (FIAF…VLTM), 43-63 (LGPF…GVML), 106-126 (VSLT…LSFA), 138-158 (LIGL…ISLF), 166-186 (AILF…ILGI), 215-235 (VIST…LTAI), 249-269 (LLMF…ISGI), 301-321 (YLGI…SLAS), 359-379 (VWAS…VPFL), 405-425 (LAVL…FMIL), 443-463 (GVSF…ITAW), and 468-488 (TFKL…FIHS).

To M.genitalium MG225.

It localises to the cell membrane. This is an uncharacterized protein from Mycoplasma pneumoniae (strain ATCC 29342 / M129 / Subtype 1) (Mycoplasmoides pneumoniae).